The primary structure comprises 107 residues: MDLNNRLTEDETLEQAYDIFLELAGDNLDPADILLFNLQFEERGGAELFDPAEDWQEHVDFDVNPDFFAEVVIGLADSDGEEINDVFARVLLCREKDHKLCHILWKE.

Belongs to the putative dsDNA mimic protein family.

In terms of biological role, may act as a double-stranded DNA (dsDNA) mimic. Probably regulates the activity of a dsDNA-binding protein. In Yersinia enterocolitica serotype O:8 / biotype 1B (strain NCTC 13174 / 8081), this protein is Putative double-stranded DNA mimic protein YE2228.